A 256-amino-acid polypeptide reads, in one-letter code: Trans-aconitate 2-methyltransferase (256 aa).

The protein belongs to the methyltransferase superfamily. Tam family.

The protein resides in the cytoplasm. The catalysed reaction is trans-aconitate + S-adenosyl-L-methionine = (E)-3-(methoxycarbonyl)pent-2-enedioate + S-adenosyl-L-homocysteine. Functionally, catalyzes the S-adenosylmethionine monomethyl esterification of trans-aconitate. The polypeptide is Trans-aconitate 2-methyltransferase (Rhodopseudomonas palustris (strain BisB18)).